Here is a 558-residue protein sequence, read N- to C-terminus: Formate--tetrahydrofolate ligase (558 aa).

66 to 73 (TPAGEGKT) contributes to the ATP binding site.

It belongs to the formate--tetrahydrofolate ligase family.

It carries out the reaction (6S)-5,6,7,8-tetrahydrofolate + formate + ATP = (6R)-10-formyltetrahydrofolate + ADP + phosphate. It participates in one-carbon metabolism; tetrahydrofolate interconversion. The chain is Formate--tetrahydrofolate ligase from Neisseria meningitidis serogroup A / serotype 4A (strain DSM 15465 / Z2491).